The primary structure comprises 244 residues: Tabinhibitin 8 (244 aa).

Residues 1-23 (MTSILVSRFKISALTLQYATSDS) form the signal peptide. An SCP domain is found at 67–194 (YTGGGIIVLR…KTPLFFSSNC (128 aa)). The Cell attachment site signature appears at 143–145 (RGD).

Belongs to the CRISP family. As to expression, expressed in salivary glands.

The protein localises to the secreted. In terms of biological role, inhibits platelet aggregation induced by all agonists tested (ADP, arachidonic acid, the thromboxane A2 analog U46619, thrombin, and snake venom snaclecs (TMVA that activates platelet through GPIB, and stejnulxin that specifically acts through GPVI (GP6))). May act by competing with fibrinogen for binding to glycoprotein IIb/IIIa (ITGA2B/ITGB3). This is Tabinhibitin 8 from Tabanus yao (Horsefly).